Consider the following 212-residue polypeptide: MKQAKFIVIEGLEGAGKSTAIQTVLDTLRQAGINEIAQTREPGGTPLAEKMRALVKEEHPGEHLHDMTELLLLYAARVQLVENVIKPALHEGKWVVGDRHDLSSQAYQGGGRQIDATLMKNLRDTALGEFKPAFTLYMDIDPKVGLERARGRGELDRIEKMDISFFERTRQRYLELAKSDASIVTINAEQSIEQVANDIRSALNLWLEQLQD.

11-18 lines the ATP pocket; sequence GLEGAGKS.

Belongs to the thymidylate kinase family.

The enzyme catalyses dTMP + ATP = dTDP + ADP. Functionally, phosphorylation of dTMP to form dTDP in both de novo and salvage pathways of dTTP synthesis. This chain is Thymidylate kinase, found in Vibrio vulnificus (strain CMCP6).